The chain runs to 728 residues: Catalase-peroxidase 1 (728 aa).

A cross-link (tryptophyl-tyrosyl-methioninium (Trp-Tyr) (with M-244)) is located at residues tryptophan 91 to tyrosine 218. Histidine 92 functions as the Proton acceptor in the catalytic mechanism. The segment at residues tyrosine 218–methionine 244 is a cross-link (tryptophyl-tyrosyl-methioninium (Tyr-Met) (with W-91)). Histidine 259 contributes to the heme b binding site.

It belongs to the peroxidase family. Peroxidase/catalase subfamily. In terms of assembly, homodimer or homotetramer. Requires heme b as cofactor. In terms of processing, formation of the three residue Trp-Tyr-Met cross-link is important for the catalase, but not the peroxidase activity of the enzyme.

The enzyme catalyses H2O2 + AH2 = A + 2 H2O. It catalyses the reaction 2 H2O2 = O2 + 2 H2O. Bifunctional enzyme with both catalase and broad-spectrum peroxidase activity. In Burkholderia ambifaria (strain ATCC BAA-244 / DSM 16087 / CCUG 44356 / LMG 19182 / AMMD) (Burkholderia cepacia (strain AMMD)), this protein is Catalase-peroxidase 1.